We begin with the raw amino-acid sequence, 293 residues long: MPHGQPCGACDGSCRMAQRGTPSTSPLIPSLTPSPPAGDPSPRSSQRIDAVRVPARLPGGSDHPEYGMPLSPRALRPYLARGPGAFCAPPWRPDVNRLAGDVNRLFRGISTSSIHVTEDSRTLRRALLDFYAMGYTHTRPTLECWQSLLQLLPEQSFPLRATLRALNSEDRYEQRFLEPPSDPPNTLFGEECDVSGDESPSEEEEEDEASGESSVSEFSPEEETASSEYDSFSDVGEDDSSCTGKWSSSESESDSESDAPTNNHHPTTRASAAKKRRKRQPPKGERPTKSARR.

Disordered regions lie at residues 1 to 49 (MPHG…QRID) and 175 to 293 (RFLE…SARR). Positions 21-31 (TPSTSPLIPSL) are enriched in low complexity. The segment covering 190 to 210 (EECDVSGDESPSEEEEEDEAS) has biased composition (acidic residues). Over residues 272 to 281 (AAKKRRKRQP) the composition is skewed to basic residues. Over residues 282–293 (PKGERPTKSARR) the composition is skewed to basic and acidic residues.

Belongs to the herpesviridae ICP22 family.

The chain is Transcriptional regulator ICP22 homolog (IR4) from Equus caballus (Horse).